Here is an 87-residue protein sequence, read N- to C-terminus: Cell division topological specificity factor (87 aa).

The protein belongs to the MinE family.

Functionally, prevents the cell division inhibition by proteins MinC and MinD at internal division sites while permitting inhibition at polar sites. This ensures cell division at the proper site by restricting the formation of a division septum at the midpoint of the long axis of the cell. The protein is Cell division topological specificity factor of Clostridium botulinum (strain ATCC 19397 / Type A).